Reading from the N-terminus, the 417-residue chain is Serine hydroxymethyltransferase (417 aa).

Residues Leu112 and 116–118 each bind (6S)-5,6,7,8-tetrahydrofolate; that span reads GHL. Lys221 is modified (N6-(pyridoxal phosphate)lysine). Glu247 is a binding site for (6S)-5,6,7,8-tetrahydrofolate.

Belongs to the SHMT family. Homodimer. Requires pyridoxal 5'-phosphate as cofactor.

It localises to the cytoplasm. It carries out the reaction (6R)-5,10-methylene-5,6,7,8-tetrahydrofolate + glycine + H2O = (6S)-5,6,7,8-tetrahydrofolate + L-serine. It functions in the pathway one-carbon metabolism; tetrahydrofolate interconversion. The protein operates within amino-acid biosynthesis; glycine biosynthesis; glycine from L-serine: step 1/1. Its function is as follows. Catalyzes the reversible interconversion of serine and glycine with tetrahydrofolate (THF) serving as the one-carbon carrier. This reaction serves as the major source of one-carbon groups required for the biosynthesis of purines, thymidylate, methionine, and other important biomolecules. Also exhibits THF-independent aldolase activity toward beta-hydroxyamino acids, producing glycine and aldehydes, via a retro-aldol mechanism. The chain is Serine hydroxymethyltransferase from Borrelia garinii subsp. bavariensis (strain ATCC BAA-2496 / DSM 23469 / PBi) (Borreliella bavariensis).